The primary structure comprises 152 residues: Superoxide dismutase [Cu-Zn] (152 aa).

3 residues coordinate Cu cation: His-45, His-47, and His-62. A disulfide bridge connects residues Cys-56 and Cys-145. 4 residues coordinate Zn(2+): His-62, His-70, His-79, and Asp-82. A Cu cation-binding site is contributed by His-119.

This sequence belongs to the Cu-Zn superoxide dismutase family. In terms of assembly, homodimer. Cu cation is required as a cofactor. It depends on Zn(2+) as a cofactor.

It localises to the cytoplasm. It carries out the reaction 2 superoxide + 2 H(+) = H2O2 + O2. Destroys radicals which are normally produced within the cells and which are toxic to biological systems. The sequence is that of Superoxide dismutase [Cu-Zn] (SODCC) from Carica papaya (Papaya).